We begin with the raw amino-acid sequence, 432 residues long: Phosphomevalonate kinase (432 aa).

Residues K10 and 142–148 each bind ATP; that span reads VEKTGLG.

It belongs to the GHMP kinase family. Mevalonate kinase subfamily.

Its subcellular location is the cytoplasm. It catalyses the reaction (R)-5-phosphomevalonate + ATP = (R)-5-diphosphomevalonate + ADP. The protein operates within isoprenoid biosynthesis; isopentenyl diphosphate biosynthesis via mevalonate pathway; isopentenyl diphosphate from (R)-mevalonate: step 2/3. Its function is as follows. Phosphomevalonate kinase; part of the second module of ergosterol biosynthesis pathway that includes the middle steps of the pathway. ERG8 converts 5-phosphomevalonate to 5-diphosphomevalonate. The second module is carried out in the vacuole and involves the formation of farnesyl diphosphate, which is also an important intermediate in the biosynthesis of ubiquinone, dolichol, heme and prenylated proteins. Activity by the mevalonate kinase ERG12 first converts mevalonate into 5-phosphomevalonate. 5-phosphomevalonate is then further converted to 5-diphosphomevalonate by the phosphomevalonate kinase ERG8. The diphosphomevalonate decarboxylase MVD then produces isopentenyl diphosphate. The isopentenyl-diphosphate delta-isomerase IDI1 then catalyzes the 1,3-allylic rearrangement of the homoallylic substrate isopentenyl (IPP) to its highly electrophilic allylic isomer, dimethylallyl diphosphate (DMAPP). Finally the farnesyl diphosphate synthase ERG20 catalyzes the sequential condensation of isopentenyl pyrophosphate with dimethylallyl pyrophosphate, and then with the resultant geranylpyrophosphate to the ultimate product farnesyl pyrophosphate. In Candida albicans (strain SC5314 / ATCC MYA-2876) (Yeast), this protein is Phosphomevalonate kinase.